A 105-amino-acid polypeptide reads, in one-letter code: Large ribosomal subunit protein uL24 (105 aa).

Belongs to the universal ribosomal protein uL24 family. Part of the 50S ribosomal subunit.

One of two assembly initiator proteins, it binds directly to the 5'-end of the 23S rRNA, where it nucleates assembly of the 50S subunit. In terms of biological role, one of the proteins that surrounds the polypeptide exit tunnel on the outside of the subunit. The sequence is that of Large ribosomal subunit protein uL24 from Sorangium cellulosum (strain So ce56) (Polyangium cellulosum (strain So ce56)).